A 128-amino-acid chain; its full sequence is Putative transmembrane protein 244 (128 aa).

The next 3 membrane-spanning stretches (helical) occupy residues 17–37 (FLLCVILFYTVYYVSLSMGCV), 65–85 (VLLVSTEVTYFVCGLFFVPVV), and 93–113 (AISVTILHVAITSTVMLEFPL).

Its subcellular location is the membrane. In Homo sapiens (Human), this protein is Putative transmembrane protein 244 (TMEM244).